A 139-amino-acid chain; its full sequence is Putative pre-16S rRNA nuclease (139 aa).

This sequence belongs to the YqgF nuclease family.

The protein resides in the cytoplasm. Its function is as follows. Could be a nuclease involved in processing of the 5'-end of pre-16S rRNA. The sequence is that of Putative pre-16S rRNA nuclease from Legionella pneumophila subsp. pneumophila (strain Philadelphia 1 / ATCC 33152 / DSM 7513).